The primary structure comprises 453 residues: tRNA modification GTPase MnmE (453 aa).

The (6S)-5-formyl-5,6,7,8-tetrahydrofolate site is built by Arg-22, Glu-79, and Lys-119. The TrmE-type G domain maps to 215–376 (GMKVVIAGRP…LKQHLKSLMG (162 aa)). Residue Asn-225 coordinates K(+). GTP-binding positions include 225–230 (NAGKSS), 244–250 (TEIAGTT), 269–272 (DTAG), and 334–337 (NKAD). Residue Ser-229 coordinates Mg(2+). Positions 244, 246, and 249 each coordinate K(+). Thr-250 lines the Mg(2+) pocket. Lys-453 lines the (6S)-5-formyl-5,6,7,8-tetrahydrofolate pocket.

This sequence belongs to the TRAFAC class TrmE-Era-EngA-EngB-Septin-like GTPase superfamily. TrmE GTPase family. As to quaternary structure, homodimer. Heterotetramer of two MnmE and two MnmG subunits. It depends on K(+) as a cofactor.

It is found in the cytoplasm. In terms of biological role, exhibits a very high intrinsic GTPase hydrolysis rate. Involved in the addition of a carboxymethylaminomethyl (cmnm) group at the wobble position (U34) of certain tRNAs, forming tRNA-cmnm(5)s(2)U34. This Shewanella pealeana (strain ATCC 700345 / ANG-SQ1) protein is tRNA modification GTPase MnmE.